A 421-amino-acid polypeptide reads, in one-letter code: Anhydromevalonate phosphate decarboxylase (421 aa).

Mn(2+)-binding residues include Asn131 and Glu194. Asp240 (proton acceptor) is an active-site residue.

The protein belongs to the UbiD family. Prenylated FMN serves as cofactor. It depends on Mn(2+) as a cofactor.

The enzyme catalyses (2E)-3-methyl-5-phosphooxypent-2-enoate + H(+) = isopentenyl phosphate + CO2. The protein operates within isoprenoid biosynthesis; isopentenyl diphosphate biosynthesis via mevalonate pathway. In terms of biological role, catalyzes the conversion of trans-anhydromevalonate 5-phosphate (tAHMP) into isopentenyl phosphate. Involved in the archaeal mevalonate (MVA) pathway, which provides fundamental precursors for isoprenoid biosynthesis, such as isopentenyl diphosphate (IPP) and dimethylallyl diphosphate (DMAPP). The sequence is that of Anhydromevalonate phosphate decarboxylase from Methanocaldococcus jannaschii (strain ATCC 43067 / DSM 2661 / JAL-1 / JCM 10045 / NBRC 100440) (Methanococcus jannaschii).